A 31-amino-acid polypeptide reads, in one-letter code: Cytochrome b6-f complex subunit 6 (31 aa).

The helical transmembrane segment at 4–24 threads the bilayer; it reads LTSYFGFLLAALTITPALFIG.

It belongs to the PetL family. The 4 large subunits of the cytochrome b6-f complex are cytochrome b6, subunit IV (17 kDa polypeptide, PetD), cytochrome f and the Rieske protein, while the 4 small subunits are PetG, PetL, PetM and PetN. The complex functions as a dimer.

Its subcellular location is the plastid. The protein resides in the chloroplast thylakoid membrane. Functionally, component of the cytochrome b6-f complex, which mediates electron transfer between photosystem II (PSII) and photosystem I (PSI), cyclic electron flow around PSI, and state transitions. PetL is important for photoautotrophic growth as well as for electron transfer efficiency and stability of the cytochrome b6-f complex. The polypeptide is Cytochrome b6-f complex subunit 6 (Agrostis stolonifera (Creeping bentgrass)).